Reading from the N-terminus, the 108-residue chain is Structural protein 1 (108 aa).

The Intravirion portion of the chain corresponds to 1–77 (MSRVSEYGVP…LKMQMDRLCN (77 aa)). Residues 78–98 (VLGVVLQMATLALVTYIAFVV) traverse the membrane as a helical; Signal-anchor for type II membrane protein segment. Topologically, residues 99-108 (HTRATSCKRE) are virion surface.

It belongs to the varicellovirus ORF1 protein family. Homodimer. Post-translationally, phosphorylated.

It is found in the virion membrane. Its subcellular location is the host Golgi apparatus membrane. The protein is Structural protein 1 of Homo sapiens (Human).